Reading from the N-terminus, the 519-residue chain is Signal transduction histidine-protein kinase/phosphatase MprB (519 aa).

The Cytoplasmic segment spans residues 1–26; that stretch reads MVRFAWRRRASLRATSSLSLRWRVML. Residues 27 to 47 traverse the membrane as a helical segment; sequence LAMSMVAMVVVLMAFAVYVVI. The Extracellular portion of the chain corresponds to 48–163; that stretch reads SAALYSDIDN…PTEAVMTKLR (116 aa). A helical membrane pass occupies residues 164–184; it reads WVLLIVGSLGVAVAAVAGGMV. Over 185–519 the chain is Cytoplasmic; that stretch reads TRAGLRPVGR…SVDYQSARAR (335 aa). The region spanning 186-238 is the HAMP domain; that stretch reads RAGLRPVGRLTEAAERVARTDDLRPIPVFGSDELARLTEAFNLMLRALAESRE. The 221-residue stretch at 246 to 466 folds into the Histidine kinase domain; the sequence is DAGHELRTPL…SIYVLLPGRP (221 aa). Position 249 is a phosphohistidine; by autocatalysis (histidine 249).

Requires Mg(2+) as cofactor. The cofactor is Mn(2+). Autophosphorylated.

The protein resides in the cell membrane. The catalysed reaction is ATP + protein L-histidine = ADP + protein N-phospho-L-histidine.. Member of the two-component regulatory system MprB/MprA which contributes to maintaining a balance among several systems involved in stress resistance and is required for establishment and maintenance of persistent infection in the host. In response to environmental signals MprB acts both as a membrane-associated protein kinase that undergoes autophosphorylation and subsequently transfers the phosphate to MprA, and a protein phosphatase that dephosphorylates phospho-MprA. The sequence is that of Signal transduction histidine-protein kinase/phosphatase MprB (mprB) from Mycobacterium leprae (strain TN).